The primary structure comprises 350 residues: Methylthioribose-1-phosphate isomerase (350 aa).

Substrate is bound by residues 47–49 (RGA), arginine 90, and glutamine 197. Aspartate 238 (proton donor) is an active-site residue. Substrate is bound at residue 248–249 (NK).

The protein belongs to the eIF-2B alpha/beta/delta subunits family. MtnA subfamily.

It carries out the reaction 5-(methylsulfanyl)-alpha-D-ribose 1-phosphate = 5-(methylsulfanyl)-D-ribulose 1-phosphate. The protein operates within amino-acid biosynthesis; L-methionine biosynthesis via salvage pathway; L-methionine from S-methyl-5-thio-alpha-D-ribose 1-phosphate: step 1/6. Its function is as follows. Catalyzes the interconversion of methylthioribose-1-phosphate (MTR-1-P) into methylthioribulose-1-phosphate (MTRu-1-P). This chain is Methylthioribose-1-phosphate isomerase, found in Nitratidesulfovibrio vulgaris (strain DP4) (Desulfovibrio vulgaris).